The primary structure comprises 379 residues: Cobalt-precorrin-5B C(1)-methyltransferase (379 aa).

It belongs to the CbiD family.

The catalysed reaction is Co-precorrin-5B + S-adenosyl-L-methionine = Co-precorrin-6A + S-adenosyl-L-homocysteine. It functions in the pathway cofactor biosynthesis; adenosylcobalamin biosynthesis; cob(II)yrinate a,c-diamide from sirohydrochlorin (anaerobic route): step 6/10. In terms of biological role, catalyzes the methylation of C-1 in cobalt-precorrin-5B to form cobalt-precorrin-6A. This chain is Cobalt-precorrin-5B C(1)-methyltransferase, found in Salmonella schwarzengrund (strain CVM19633).